Reading from the N-terminus, the 421-residue chain is 4'-demethylrebeccamycin synthase (421 aa).

The protein belongs to the glycosyltransferase 28 family.

The enzyme catalyses 4'-demethylrebeccamycin + H2O = dichloroarcyriaflavin A + beta-D-glucose. It functions in the pathway alkaloid biosynthesis. Functionally, catalyzes the penultimate step in the biosynthesis of rebeccamycin, an indolocarbazole alkaloid that inhibits topoisomerase 1. Has a wide substrate range, including staurosporine aglycone, EJG-III-108A, J-104303, 6-N-methyl-arcyriaflavin and indolo-[2,3-a]-carbazole. This is 4'-demethylrebeccamycin synthase (rebG) from Lentzea aerocolonigenes (Lechevalieria aerocolonigenes).